We begin with the raw amino-acid sequence, 263 residues long: Ubiquinone/menaquinone biosynthesis C-methyltransferase UbiE (263 aa).

Positions 86, 107, and 152 each coordinate S-adenosyl-L-methionine.

It belongs to the class I-like SAM-binding methyltransferase superfamily. MenG/UbiE family.

The catalysed reaction is a 2-demethylmenaquinol + S-adenosyl-L-methionine = a menaquinol + S-adenosyl-L-homocysteine + H(+). The enzyme catalyses a 2-methoxy-6-(all-trans-polyprenyl)benzene-1,4-diol + S-adenosyl-L-methionine = a 5-methoxy-2-methyl-3-(all-trans-polyprenyl)benzene-1,4-diol + S-adenosyl-L-homocysteine + H(+). It functions in the pathway quinol/quinone metabolism; menaquinone biosynthesis; menaquinol from 1,4-dihydroxy-2-naphthoate: step 2/2. It participates in cofactor biosynthesis; ubiquinone biosynthesis. In terms of biological role, methyltransferase required for the conversion of demethylmenaquinol (DMKH2) to menaquinol (MKH2) and the conversion of 2-polyprenyl-6-methoxy-1,4-benzoquinol (DDMQH2) to 2-polyprenyl-3-methyl-6-methoxy-1,4-benzoquinol (DMQH2). In Brucella anthropi (strain ATCC 49188 / DSM 6882 / CCUG 24695 / JCM 21032 / LMG 3331 / NBRC 15819 / NCTC 12168 / Alc 37) (Ochrobactrum anthropi), this protein is Ubiquinone/menaquinone biosynthesis C-methyltransferase UbiE.